Reading from the N-terminus, the 263-residue chain is Type III pantothenate kinase (263 aa).

9 to 16 (DIGNTSIK) contacts ATP. Substrate contacts are provided by residues Tyr103 and 110-113 (GADR). Catalysis depends on Asp112, which acts as the Proton acceptor. Residue Asp134 coordinates K(+). Thr137 is a binding site for ATP. Thr190 lines the substrate pocket.

Belongs to the type III pantothenate kinase family. In terms of assembly, homodimer. It depends on NH4(+) as a cofactor. The cofactor is K(+).

The protein localises to the cytoplasm. It catalyses the reaction (R)-pantothenate + ATP = (R)-4'-phosphopantothenate + ADP + H(+). The protein operates within cofactor biosynthesis; coenzyme A biosynthesis; CoA from (R)-pantothenate: step 1/5. Its function is as follows. Catalyzes the phosphorylation of pantothenate (Pan), the first step in CoA biosynthesis. The polypeptide is Type III pantothenate kinase (Desulfovibrio desulfuricans (strain ATCC 27774 / DSM 6949 / MB)).